Here is a 239-residue protein sequence, read N- to C-terminus: UDP-2,3-diacylglucosamine hydrolase (239 aa).

Mn(2+) is bound by residues aspartate 9, histidine 11, aspartate 42, asparagine 80, and histidine 115. 80 to 81 contributes to the substrate binding site; that stretch reads NR. Substrate contacts are provided by aspartate 123, serine 161, lysine 165, lysine 168, and histidine 196. The Mn(2+) site is built by histidine 196 and histidine 198.

It belongs to the LpxH family. It depends on Mn(2+) as a cofactor.

The protein resides in the cell inner membrane. It carries out the reaction UDP-2-N,3-O-bis[(3R)-3-hydroxytetradecanoyl]-alpha-D-glucosamine + H2O = 2-N,3-O-bis[(3R)-3-hydroxytetradecanoyl]-alpha-D-glucosaminyl 1-phosphate + UMP + 2 H(+). The protein operates within glycolipid biosynthesis; lipid IV(A) biosynthesis; lipid IV(A) from (3R)-3-hydroxytetradecanoyl-[acyl-carrier-protein] and UDP-N-acetyl-alpha-D-glucosamine: step 4/6. In terms of biological role, hydrolyzes the pyrophosphate bond of UDP-2,3-diacylglucosamine to yield 2,3-diacylglucosamine 1-phosphate (lipid X) and UMP by catalyzing the attack of water at the alpha-P atom. Involved in the biosynthesis of lipid A, a phosphorylated glycolipid that anchors the lipopolysaccharide to the outer membrane of the cell. The chain is UDP-2,3-diacylglucosamine hydrolase from Pasteurella multocida (strain Pm70).